The primary structure comprises 227 residues: ATP synthase F(0) complex subunit a (227 aa).

The next 6 membrane-spanning stretches (helical) occupy residues 14–34 (LLGI…FPTP), 69–89 (WATI…LGLL), 99–119 (LSLN…IGML), 137–157 (LLIP…PLAL), 180–200 (FVLI…LFLL), and 202–222 (ILEV…LSLY).

It belongs to the ATPase A chain family. Component of the ATP synthase complex composed at least of ATP5F1A/subunit alpha, ATP5F1B/subunit beta, ATP5MC1/subunit c (homooctomer), MT-ATP6/subunit a, MT-ATP8/subunit 8, ATP5ME/subunit e, ATP5MF/subunit f, ATP5MG/subunit g, ATP5MK/subunit k, ATP5MJ/subunit j, ATP5F1C/subunit gamma, ATP5F1D/subunit delta, ATP5F1E/subunit epsilon, ATP5PF/subunit F6, ATP5PB/subunit b, ATP5PD/subunit d, ATP5PO/subunit OSCP. ATP synthase complex consists of a soluble F(1) head domain (subunits alpha(3) and beta(3)) - the catalytic core - and a membrane F(0) domain - the membrane proton channel (subunits c, a, 8, e, f, g, k and j). These two domains are linked by a central stalk (subunits gamma, delta, and epsilon) rotating inside the F1 region and a stationary peripheral stalk (subunits F6, b, d, and OSCP). Interacts with DNAJC30; interaction is direct.

It is found in the mitochondrion inner membrane. The enzyme catalyses H(+)(in) = H(+)(out). Its function is as follows. Subunit a, of the mitochondrial membrane ATP synthase complex (F(1)F(0) ATP synthase or Complex V) that produces ATP from ADP in the presence of a proton gradient across the membrane which is generated by electron transport complexes of the respiratory chain. ATP synthase complex consist of a soluble F(1) head domain - the catalytic core - and a membrane F(1) domain - the membrane proton channel. These two domains are linked by a central stalk rotating inside the F(1) region and a stationary peripheral stalk. During catalysis, ATP synthesis in the catalytic domain of F(1) is coupled via a rotary mechanism of the central stalk subunits to proton translocation. With the subunit c (ATP5MC1), forms the proton-conducting channel in the F(0) domain, that contains two crucial half-channels (inlet and outlet) that facilitate proton movement from the mitochondrial intermembrane space (IMS) into the matrix. Protons are taken up via the inlet half-channel and released through the outlet half-channel, following a Grotthuss mechanism. The polypeptide is ATP synthase F(0) complex subunit a (Squalus acanthias (Spiny dogfish)).